We begin with the raw amino-acid sequence, 319 residues long: Polyprenal reductase (319 aa).

At 1–12 the chain is on the cytoplasmic side; sequence MQLVQLLPPGVS. The chain crosses the membrane as a helical span at residues 13–33; it reads LLALVWLAVDAAFLTALLLYL. At 34 to 79 the chain is on the lumenal side; it reads QRGCDSGRSLLCSVFQDLIRYGKTKSGLRRPSWLQWFDIPKRCFWH. A helical membrane pass occupies residues 80 to 100; it reads FYFVSLVWNGFLLWILLHLLL. The Cytoplasmic segment spans residues 101–122; it reads QSVPVPEWLQAVLQFLCAGSEP. Residues 123–143 form a helical membrane-spanning segment; sequence QVLGGELSVVLAFSLLWLHSL. At 144–158 the chain is on the lumenal side; it reads RRLLECLFVSIFSNG. Residues 159–179 form a helical membrane-spanning segment; it reads VIHFVQYCFGLGYYILIGFTI. The Cytoplasmic segment spans residues 180–195; that stretch reads LGYCPLDRRTAVSLDD. The chain crosses the membrane as a helical span at residues 196-216; the sequence is LLMQGNWYHILGLTLYVWASL. Residues 217–266 are Lumenal-facing; sequence HQYTCHCILADLRKSASGAIINLKHAVPTGDWFEKVSCPHYFAELLIYLS. Residues 267–287 traverse the membrane as a helical segment; sequence IAVVFGLLNTIWWLVVLYVLL. Topologically, residues 288–319 are cytoplasmic; that stretch reads SQALAAVLCHEFYHEKFDSYPIHRKAFIPLIF.

The protein belongs to the steroid 5-alpha reductase family. Polyprenal reductase subfamily.

The protein resides in the endoplasmic reticulum membrane. It catalyses the reaction a di-trans,poly-cis-dolichal + NADP(+) = a di-trans,poly-cis-polyprenal + NADPH + H(+). The catalysed reaction is a 3-oxo-5alpha-steroid + NADP(+) = a 3-oxo-Delta(4)-steroid + NADPH + H(+). The enzyme catalyses androst-4-ene-3,17-dione + NADPH + H(+) = 5alpha-androstan-3,17-dione + NADP(+). It carries out the reaction 17beta-hydroxy-5alpha-androstan-3-one + NADP(+) = testosterone + NADPH + H(+). Its pathway is protein modification; protein glycosylation. Plays a key role in early steps of protein N-linked glycosylation by being involved in the conversion of polyprenol into dolichol. Acts as a polyprenal reductase that mediates the reduction of polyprenal into dolichal in a NADP-dependent mechanism. Dolichols are required for the synthesis of dolichol-linked monosaccharides and the oligosaccharide precursor used for N-glycosylation. Also able to convert testosterone (T) into 5-alpha-dihydrotestosterone (DHT). This Xenopus laevis (African clawed frog) protein is Polyprenal reductase (srd5a3).